The sequence spans 308 residues: 4-hydroxy-tetrahydrodipicolinate synthase (308 aa).

Position 53 (Thr-53) interacts with pyruvate. Residue Tyr-141 is the Proton donor/acceptor of the active site. The Schiff-base intermediate with substrate role is filled by Lys-169. Position 209 (Val-209) interacts with pyruvate.

Belongs to the DapA family. As to quaternary structure, homotetramer; dimer of dimers.

The protein localises to the cytoplasm. It catalyses the reaction L-aspartate 4-semialdehyde + pyruvate = (2S,4S)-4-hydroxy-2,3,4,5-tetrahydrodipicolinate + H2O + H(+). It participates in amino-acid biosynthesis; L-lysine biosynthesis via DAP pathway; (S)-tetrahydrodipicolinate from L-aspartate: step 3/4. Functionally, catalyzes the condensation of (S)-aspartate-beta-semialdehyde [(S)-ASA] and pyruvate to 4-hydroxy-tetrahydrodipicolinate (HTPA). The sequence is that of 4-hydroxy-tetrahydrodipicolinate synthase from Acidothermus cellulolyticus (strain ATCC 43068 / DSM 8971 / 11B).